The chain runs to 423 residues: Imidazolonepropionase (423 aa).

Fe(3+) contacts are provided by His-78 and His-80. Zn(2+) is bound by residues His-78 and His-80. Positions 87, 150, and 183 each coordinate 4-imidazolone-5-propanoate. Tyr-150 contributes to the N-formimidoyl-L-glutamate binding site. Residue His-247 coordinates Fe(3+). His-247 is a Zn(2+) binding site. 4-imidazolone-5-propanoate is bound at residue Glu-250. Asp-322 lines the Fe(3+) pocket. Position 322 (Asp-322) interacts with Zn(2+). N-formimidoyl-L-glutamate-binding residues include Asn-324 and Gly-326. Ser-327 provides a ligand contact to 4-imidazolone-5-propanoate.

Belongs to the metallo-dependent hydrolases superfamily. HutI family. Zn(2+) is required as a cofactor. Requires Fe(3+) as cofactor.

The protein localises to the cytoplasm. It catalyses the reaction 4-imidazolone-5-propanoate + H2O = N-formimidoyl-L-glutamate. The protein operates within amino-acid degradation; L-histidine degradation into L-glutamate; N-formimidoyl-L-glutamate from L-histidine: step 3/3. Catalyzes the hydrolytic cleavage of the carbon-nitrogen bond in imidazolone-5-propanoate to yield N-formimidoyl-L-glutamate. It is the third step in the universal histidine degradation pathway. This is Imidazolonepropionase from Bacillus mycoides (strain KBAB4) (Bacillus weihenstephanensis).